We begin with the raw amino-acid sequence, 1120 residues long: Topless-related protein 1 (1120 aa).

Residues 4–36 (LSRELVFLILQFLDEEKFKETVHKLEQESGFFF) form the LisH domain. A CTLH domain is found at 34-92 (FFFNMKYFEDEVHNGNWDEVEKYLSGFTKVDDNRYSMKIFFEIRKQKYLEALDRHDRPK). 2 disordered regions span residues 210-235 (ARAP…PLGA) and 283-307 (HPRT…SKRT). S214 carries the phosphoserine modification. WD repeat units follow at residues 353 to 393 (SQGS…RLVQ), 415 to 454 (EPVV…DMRQ), 460 to 501 (AHVG…KRYT), 504 to 545 (GHEA…SRVD), 548 to 591 (APGR…VKRT), 595 to 634 (FHKR…LLTA), 639 to 678 (GGLQ…RLLH), 699 to 745 (ERPA…EPSQ), 755 to 794 (MRVT…RNAT), 822 to 860 (NPEE…TMAT), 863 to 903 (PPPP…VKSK), 906 to 945 (GHSK…KQKS), 999 to 1038 (ESAA…LRCR), and 1052 to 1091 (SNVH…GKWG). The disordered stretch occupies residues 1087-1120 (EGKWGVAPPPENGSASAVTATPSVGASASDQPQR). Polar residues predominate over residues 1099–1120 (GSASAVTATPSVGASASDQPQR).

Tetramer. Interacts with SNC1 (via TIR domain) and HDA19. Interacts with SPL (via EAR motif). Interacts with SPEAR3/TIE1. Binds to and corepresses GAF1/IDD2. As to expression, highly expressed in stamen primordium, microsporocyte, ovule primordium and megasporocyte during sporogenesis.

The protein localises to the nucleus. In terms of biological role, transcriptional corepressor. Activates TIR-NB-LRR R protein-mediated immune responses through repression of negative regulators such as CNGC2/DND1. Negative regulator of jasmonate responses. The sequence is that of Topless-related protein 1 (TPR1) from Arabidopsis thaliana (Mouse-ear cress).